The primary structure comprises 204 residues: Holliday junction branch migration complex subunit RuvA (204 aa).

The segment at 1–63 (MIASLRGTVI…EDAMKLYGFI (63 aa)) is domain I. Residues 64 to 142 (DDQSREMFAL…AYTVGVVDDG (79 aa)) are domain II. Residues 143 to 151 (APTAPTQGV) are flexible linker. Residues 152–204 (APVVVVDQVTQALTGLGFTEKQADDAVAAVLSADPGLDTSAALRAALAKLGGK) form a domain III region.

Belongs to the RuvA family. In terms of assembly, homotetramer. Forms an RuvA(8)-RuvB(12)-Holliday junction (HJ) complex. HJ DNA is sandwiched between 2 RuvA tetramers; dsDNA enters through RuvA and exits via RuvB. An RuvB hexamer assembles on each DNA strand where it exits the tetramer. Each RuvB hexamer is contacted by two RuvA subunits (via domain III) on 2 adjacent RuvB subunits; this complex drives branch migration. In the full resolvosome a probable DNA-RuvA(4)-RuvB(12)-RuvC(2) complex forms which resolves the HJ.

It is found in the cytoplasm. The RuvA-RuvB-RuvC complex processes Holliday junction (HJ) DNA during genetic recombination and DNA repair, while the RuvA-RuvB complex plays an important role in the rescue of blocked DNA replication forks via replication fork reversal (RFR). RuvA specifically binds to HJ cruciform DNA, conferring on it an open structure. The RuvB hexamer acts as an ATP-dependent pump, pulling dsDNA into and through the RuvAB complex. HJ branch migration allows RuvC to scan DNA until it finds its consensus sequence, where it cleaves and resolves the cruciform DNA. The polypeptide is Holliday junction branch migration complex subunit RuvA (Corynebacterium efficiens (strain DSM 44549 / YS-314 / AJ 12310 / JCM 11189 / NBRC 100395)).